Here is an 81-residue protein sequence, read N- to C-terminus: D-alanyl carrier protein (81 aa).

The region spanning 1–81 (MADEAIKNGV…KIIAKVEQAQ (81 aa)) is the Carrier domain. Ser-39 carries the O-(pantetheine 4'-phosphoryl)serine modification.

The protein belongs to the DltC family. In terms of processing, 4'-phosphopantetheine is transferred from CoA to a specific serine of apo-DCP.

The protein resides in the cytoplasm. Its pathway is cell wall biogenesis; lipoteichoic acid biosynthesis. In terms of biological role, carrier protein involved in the D-alanylation of lipoteichoic acid (LTA). The loading of thioester-linked D-alanine onto DltC is catalyzed by D-alanine--D-alanyl carrier protein ligase DltA. The DltC-carried D-alanyl group is further transferred to cell membrane phosphatidylglycerol (PG) by forming an ester bond, probably catalyzed by DltD. D-alanylation of LTA plays an important role in modulating the properties of the cell wall in Gram-positive bacteria, influencing the net charge of the cell wall. This Lacticaseibacillus rhamnosus (Lactobacillus rhamnosus) protein is D-alanyl carrier protein.